The chain runs to 449 residues: Putative cytochrome P450 135A1 (449 aa).

Heme is bound at residue cysteine 383.

This sequence belongs to the cytochrome P450 family. It depends on heme as a cofactor.

This Mycobacterium tuberculosis (strain CDC 1551 / Oshkosh) protein is Putative cytochrome P450 135A1 (cyp135A1).